Here is a 151-residue protein sequence, read N- to C-terminus: Ribosome maturation factor RimP (151 aa).

This sequence belongs to the RimP family.

The protein localises to the cytoplasm. Required for maturation of 30S ribosomal subunits. This is Ribosome maturation factor RimP from Haemophilus influenzae (strain 86-028NP).